The primary structure comprises 352 residues: UDP-N-acetylglucosamine--N-acetylmuramyl-(pentapeptide) pyrophosphoryl-undecaprenol N-acetylglucosamine transferase 2 (352 aa).

UDP-N-acetyl-alpha-D-glucosamine is bound by residues 11 to 13 (SAG), R164, S194, and Q289.

Belongs to the glycosyltransferase 28 family. MurG subfamily.

It localises to the cell membrane. The catalysed reaction is di-trans,octa-cis-undecaprenyl diphospho-N-acetyl-alpha-D-muramoyl-L-alanyl-D-glutamyl-meso-2,6-diaminopimeloyl-D-alanyl-D-alanine + UDP-N-acetyl-alpha-D-glucosamine = di-trans,octa-cis-undecaprenyl diphospho-[N-acetyl-alpha-D-glucosaminyl-(1-&gt;4)]-N-acetyl-alpha-D-muramoyl-L-alanyl-D-glutamyl-meso-2,6-diaminopimeloyl-D-alanyl-D-alanine + UDP + H(+). The protein operates within cell wall biogenesis; peptidoglycan biosynthesis. In terms of biological role, cell wall formation. Catalyzes the transfer of a GlcNAc subunit on undecaprenyl-pyrophosphoryl-MurNAc-pentapeptide (lipid intermediate I) to form undecaprenyl-pyrophosphoryl-MurNAc-(pentapeptide)GlcNAc (lipid intermediate II). The sequence is that of UDP-N-acetylglucosamine--N-acetylmuramyl-(pentapeptide) pyrophosphoryl-undecaprenol N-acetylglucosamine transferase 2 from Bacillus cereus (strain ATCC 14579 / DSM 31 / CCUG 7414 / JCM 2152 / NBRC 15305 / NCIMB 9373 / NCTC 2599 / NRRL B-3711).